The sequence spans 885 residues: Probable LRR receptor-like serine/threonine-protein kinase At1g51820 (885 aa).

The N-terminal stretch at 1–20 is a signal peptide; it reads MERHFVFIATYLLIFHLVQA. Residues 21 to 509 are Extracellular-facing; the sequence is QNQTGFISVD…GHKKKSVIVP (489 aa). N22, N93, N135, N194, N228, N250, N254, N281, N287, N424, N437, N456, and N461 each carry an N-linked (GlcNAc...) asparagine glycan. LRR repeat units lie at residues 403–424, 427–447, and 451–473; these read IITSLDLSSSGLTGIITQAIKN, HLQILDLSDNNLTGEVPEFLA, and SLLVINLSGNNLSGSVPPSLLQK. The helical transmembrane segment at 510 to 530 threads the bilayer; it reads VVASIASIAVLIGALVLFLIL. The Cytoplasmic segment spans residues 531 to 885; it reads RKKRSPKVEG…FGTEVSPNAR (355 aa). The Protein kinase domain occupies 578–851; that stretch reads NNFQRILGKG…QVVIELNECL (274 aa). Residues 584–592 and K606 each bind ATP; that span reads LGKGGFGMV. Residue Y651 is modified to Phosphotyrosine. Catalysis depends on D703, which acts as the Proton acceptor. Position 737 is a phosphoserine (S737). T738 and T743 each carry phosphothreonine. Y751 is modified (phosphotyrosine).

This sequence belongs to the protein kinase superfamily. Ser/Thr protein kinase family.

The protein localises to the membrane. It catalyses the reaction L-seryl-[protein] + ATP = O-phospho-L-seryl-[protein] + ADP + H(+). It carries out the reaction L-threonyl-[protein] + ATP = O-phospho-L-threonyl-[protein] + ADP + H(+). In Arabidopsis thaliana (Mouse-ear cress), this protein is Probable LRR receptor-like serine/threonine-protein kinase At1g51820.